The following is a 339-amino-acid chain: Glycerol-3-phosphate dehydrogenase [NAD(P)+] (339 aa).

Positions 15, 16, 36, and 110 each coordinate NADPH. Sn-glycerol 3-phosphate-binding residues include K110, G139, and T141. A143 is an NADPH binding site. Sn-glycerol 3-phosphate is bound by residues K195, D248, S258, R259, and N260. Residue K195 is the Proton acceptor of the active site. R259 serves as a coordination point for NADPH. Positions 283 and 285 each coordinate NADPH.

The protein belongs to the NAD-dependent glycerol-3-phosphate dehydrogenase family.

It localises to the cytoplasm. It carries out the reaction sn-glycerol 3-phosphate + NAD(+) = dihydroxyacetone phosphate + NADH + H(+). The enzyme catalyses sn-glycerol 3-phosphate + NADP(+) = dihydroxyacetone phosphate + NADPH + H(+). The protein operates within membrane lipid metabolism; glycerophospholipid metabolism. Catalyzes the reduction of the glycolytic intermediate dihydroxyacetone phosphate (DHAP) to sn-glycerol 3-phosphate (G3P), the key precursor for phospholipid synthesis. This Enterobacter sp. (strain 638) protein is Glycerol-3-phosphate dehydrogenase [NAD(P)+].